The chain runs to 387 residues: Early growth response protein 3 (387 aa).

A disordered region spans residues Pro-241–Asp-283. Residues Pro-269–Asp-283 show a composition bias toward basic and acidic residues. 3 C2H2-type zinc fingers span residues His-275 to His-299, Phe-305 to His-327, and Phe-333 to His-355. The tract at residues Arg-348–Ala-387 is disordered. Basic residues predominate over residues Arg-350–Glu-360.

The protein belongs to the EGR C2H2-type zinc-finger protein family.

Its subcellular location is the nucleus. Its function is as follows. Probable transcription factor involved in muscle spindle development. This is Early growth response protein 3 (Egr3) from Mus musculus (Mouse).